The sequence spans 242 residues: Caffeoyl-CoA O-methyltransferase (242 aa).

Lys-16 provides a ligand contact to substrate. S-adenosyl-L-methionine-binding positions include Thr-58, Glu-80, 82 to 83 (GV), Ser-88, Asp-106, and Ala-135. Asp-158 provides a ligand contact to substrate. Position 158 (Asp-158) interacts with a divalent metal cation. Asp-160 contributes to the S-adenosyl-L-methionine binding site. Residues Asp-184 and Asn-185 each coordinate a divalent metal cation. Substrate is bound at residue Asn-189.

It belongs to the class I-like SAM-binding methyltransferase superfamily. Cation-dependent O-methyltransferase family. CCoAMT subfamily. The cofactor is a divalent metal cation.

It carries out the reaction (E)-caffeoyl-CoA + S-adenosyl-L-methionine = (E)-feruloyl-CoA + S-adenosyl-L-homocysteine + H(+). Its pathway is aromatic compound metabolism; phenylpropanoid biosynthesis. Its function is as follows. Methylates caffeoyl-CoA to feruloyl-CoA and 5-hydroxyferuloyl-CoA to sinapoyl-CoA. Plays a role in the synthesis of feruloylated polysaccharides. Involved in the reinforcement of the plant cell wall. Also involved in the responding to wounding or pathogen challenge by the increased formation of cell wall-bound ferulic acid polymers. The polypeptide is Caffeoyl-CoA O-methyltransferase (CCOAOMT) (Solanum tuberosum (Potato)).